The primary structure comprises 462 residues: L-seryl-tRNA(Sec) selenium transferase (462 aa).

Position 293 is an N6-(pyridoxal phosphate)lysine (Lys293).

It belongs to the SelA family. Pyridoxal 5'-phosphate is required as a cofactor.

It localises to the cytoplasm. The enzyme catalyses L-seryl-tRNA(Sec) + selenophosphate + H(+) = L-selenocysteinyl-tRNA(Sec) + phosphate. The protein operates within aminoacyl-tRNA biosynthesis; selenocysteinyl-tRNA(Sec) biosynthesis; selenocysteinyl-tRNA(Sec) from L-seryl-tRNA(Sec) (bacterial route): step 1/1. In terms of biological role, converts seryl-tRNA(Sec) to selenocysteinyl-tRNA(Sec) required for selenoprotein biosynthesis. The sequence is that of L-seryl-tRNA(Sec) selenium transferase from Clostridium botulinum (strain Langeland / NCTC 10281 / Type F).